The sequence spans 265 residues: Early E4 31 kDa protein (265 aa).

This sequence belongs to the adenoviridae E4 30 to 34 kDa protein family. In terms of assembly, interacts with E1B-55k.

It is found in the host nucleus. Its subcellular location is the host cytoplasm. Plays a major role to prevent cellular inhibition of viral genome replication by nuclear bodies. Assembles an SCF-like E3 ubiquitin ligase complex based on the cellular proteins ELOB, ELOC, CUL5 and RBX1, in cooperation with viral E1B-55K. This viral RING-type ligase ubiquitinates cellular substrates prior to proteasomal degradation: p53/TP53, LIG4, MRE11-RAD50-NBS1 (MRN) complex, ITGA3, DAXX and BLM. This is Early E4 31 kDa protein from Canis lupus familiaris (Dog).